A 374-amino-acid polypeptide reads, in one-letter code: Chaperone protein DnaJ (374 aa).

The J domain occupies 6-71 (DYYAVLEVTR…QKRAAYDRFG (66 aa)). The CR-type zinc-finger motif lies at 130 to 209 (GVKKPITVPT…CHGAGTVERE (80 aa)). Positions 143, 146, 161, 164, 183, 186, 197, and 200 each coordinate Zn(2+). CXXCXGXG motif repeat units follow at residues 143–150 (CESCEGTG), 161–168 (CPTCHGAG), 183–190 (CPTCHGAG), and 197–204 (CAACHGAG).

Belongs to the DnaJ family. As to quaternary structure, homodimer. The cofactor is Zn(2+).

The protein localises to the cytoplasm. In terms of biological role, participates actively in the response to hyperosmotic and heat shock by preventing the aggregation of stress-denatured proteins and by disaggregating proteins, also in an autonomous, DnaK-independent fashion. Unfolded proteins bind initially to DnaJ; upon interaction with the DnaJ-bound protein, DnaK hydrolyzes its bound ATP, resulting in the formation of a stable complex. GrpE releases ADP from DnaK; ATP binding to DnaK triggers the release of the substrate protein, thus completing the reaction cycle. Several rounds of ATP-dependent interactions between DnaJ, DnaK and GrpE are required for fully efficient folding. Also involved, together with DnaK and GrpE, in the DNA replication of plasmids through activation of initiation proteins. The chain is Chaperone protein DnaJ from Gluconacetobacter diazotrophicus (strain ATCC 49037 / DSM 5601 / CCUG 37298 / CIP 103539 / LMG 7603 / PAl5).